A 276-amino-acid polypeptide reads, in one-letter code: MALLTEKRVKKTHAPASDSSPEESDSEGSQNSASEAEGNAGWADSIQKVLKTTKPKTQKKTVLARAKKSQAAVRFQKDAANKKPGFDFEIEKADVKEEDEGDNHEDEKPQASALDATLTKQQRKNVPLQLRVKPSFRDMERERTLRKVATRGVVQFFNAVRIQQKDLQQQLEEAGPLDSRQDAVLNNINKRKFLDVLMSGKRAKSTPVDNAVKKEEQETDDDDEDKGSSGKKKSEWSVLREDFMTNKKIKHWDEEDDDEEGHNDEADDSDYDDGEE.

Disordered regions lie at residues 1-132 (MALL…QLRV) and 201-276 (KRAK…DGEE). Basic and acidic residues-rich tracts occupy residues 75-95 (FQKD…KADV) and 226-245 (KGSS…DFMT). Residues 254 to 276 (EEDDDEEGHNDEADDSDYDDGEE) are compositionally biased toward acidic residues. Position 269 is a phosphoserine (S269). Y271 carries the phosphotyrosine modification.

It belongs to the RRP15 family.

This is RRP15-like protein from Drosophila melanogaster (Fruit fly).